A 218-amino-acid chain; its full sequence is Pyridoxine/pyridoxamine 5'-phosphate oxidase (218 aa).

Substrate is bound by residues 14–17 (RREY) and Lys72. FMN is bound by residues 67–72 (RIVLLK), 82–83 (YT), Arg88, Lys89, and Gln111. Residues Tyr129, Arg133, and Ser137 each coordinate substrate. Residues 146-147 (QS) and Trp191 each bind FMN. 197–199 (RLH) contributes to the substrate binding site. Residue Arg201 participates in FMN binding.

This sequence belongs to the pyridoxamine 5'-phosphate oxidase family. In terms of assembly, homodimer. Requires FMN as cofactor.

The catalysed reaction is pyridoxamine 5'-phosphate + O2 + H2O = pyridoxal 5'-phosphate + H2O2 + NH4(+). It carries out the reaction pyridoxine 5'-phosphate + O2 = pyridoxal 5'-phosphate + H2O2. It functions in the pathway cofactor metabolism; pyridoxal 5'-phosphate salvage; pyridoxal 5'-phosphate from pyridoxamine 5'-phosphate: step 1/1. Its pathway is cofactor metabolism; pyridoxal 5'-phosphate salvage; pyridoxal 5'-phosphate from pyridoxine 5'-phosphate: step 1/1. Its function is as follows. Catalyzes the oxidation of either pyridoxine 5'-phosphate (PNP) or pyridoxamine 5'-phosphate (PMP) into pyridoxal 5'-phosphate (PLP). This Escherichia coli (strain SMS-3-5 / SECEC) protein is Pyridoxine/pyridoxamine 5'-phosphate oxidase.